Consider the following 453-residue polypeptide: Ribulose bisphosphate carboxylase large chain (453 aa).

The propeptide occupies 1–2 (MS). An N-acetylproline modification is found at Pro3. Lys14 is subject to N6,N6,N6-trimethyllysine. 2 residues coordinate substrate: Asn123 and Thr173. The active-site Proton acceptor is Lys175. Lys177 serves as a coordination point for substrate. Positions 201, 203, and 204 each coordinate Mg(2+). Lys201 carries the post-translational modification N6-carboxylysine. The active-site Proton acceptor is His294. Arg295, His327, and Ser379 together coordinate substrate.

It belongs to the RuBisCO large chain family. Type I subfamily. In terms of assembly, heterohexadecamer of 8 large chains and 8 small chains; disulfide-linked. The disulfide link is formed within the large subunit homodimers. The cofactor is Mg(2+). Post-translationally, the disulfide bond which can form in the large chain dimeric partners within the hexadecamer appears to be associated with oxidative stress and protein turnover.

It is found in the plastid. The protein localises to the chloroplast. It catalyses the reaction 2 (2R)-3-phosphoglycerate + 2 H(+) = D-ribulose 1,5-bisphosphate + CO2 + H2O. The enzyme catalyses D-ribulose 1,5-bisphosphate + O2 = 2-phosphoglycolate + (2R)-3-phosphoglycerate + 2 H(+). Functionally, ruBisCO catalyzes two reactions: the carboxylation of D-ribulose 1,5-bisphosphate, the primary event in carbon dioxide fixation, as well as the oxidative fragmentation of the pentose substrate in the photorespiration process. Both reactions occur simultaneously and in competition at the same active site. The sequence is that of Ribulose bisphosphate carboxylase large chain from Valantia muralis (Wall valantia).